The sequence spans 450 residues: 23S rRNA (uracil(1939)-C(5))-methyltransferase RlmD (450 aa).

The region spanning 12–70 is the TRAM domain; sequence SKQLSAKLSLSVNQLDHLGAGIAQHQGKVVFIPGALPDETVTVQLTEQKKNYARAKLIK. [4Fe-4S] cluster contacts are provided by C83, C89, C92, and C171. Residues Q283, F312, N317, E333, D360, and D380 each contribute to the S-adenosyl-L-methionine site. The Nucleophile role is filled by C406.

The protein belongs to the class I-like SAM-binding methyltransferase superfamily. RNA M5U methyltransferase family. RlmD subfamily.

The enzyme catalyses uridine(1939) in 23S rRNA + S-adenosyl-L-methionine = 5-methyluridine(1939) in 23S rRNA + S-adenosyl-L-homocysteine + H(+). Catalyzes the formation of 5-methyl-uridine at position 1939 (m5U1939) in 23S rRNA. The polypeptide is 23S rRNA (uracil(1939)-C(5))-methyltransferase RlmD (Shewanella baltica (strain OS195)).